A 442-amino-acid chain; its full sequence is Cytokine receptor-like factor 3 (442 aa).

Met-1 carries the N-acetylmethionine modification. Residues 10 to 57 (ELLLQEARENVEAAQSYRRELGHRLEGLREARRQIKESASQTRDVLKQ) adopt a coiled-coil conformation. The Fibronectin type-III domain maps to 181–274 (PPVQIEELIE…PQIGHSTLVP (94 aa)).

Belongs to the cytokine receptor-like factor 3 family. In terms of tissue distribution, expressed in several embryonic and adult tissues, including adult and fetal brain, liver, spleen and pancreas. Expressed in adult, but not fetal kidney. Expressed in skin and squamous cell carcinoma (SCC) and in several other cancer types. Also detected in lesion actinic keratosis (AK).

The protein resides in the cytoplasm. May play a role in the negative regulation of cell cycle progression. This Homo sapiens (Human) protein is Cytokine receptor-like factor 3 (CRLF3).